The following is a 60-amino-acid chain: Large ribosomal subunit protein uL30 (60 aa).

This sequence belongs to the universal ribosomal protein uL30 family. In terms of assembly, part of the 50S ribosomal subunit.

This Leuconostoc citreum (strain KM20) protein is Large ribosomal subunit protein uL30.